We begin with the raw amino-acid sequence, 273 residues long: Putative methyltransferase Cher3 (273 aa).

Positions 1–273 (MTSERNTDIE…VKPQRIFRKS (273 aa)) constitute a CheR-type methyltransferase domain. Residues Ser-76, Arg-80, Glu-114, Asp-137, 199-200 (SL), and 215-216 (RN) each bind S-adenosyl-L-methionine.

In Pseudomonas putida (strain ATCC 47054 / DSM 6125 / CFBP 8728 / NCIMB 11950 / KT2440), this protein is Putative methyltransferase Cher3 (cheR3).